A 701-amino-acid chain; its full sequence is Potassium-transporting ATPase ATP-binding subunit (701 aa).

The segment at 1 to 28 (MNPDAPTPKNKSSRSRPSDRPQARKKAK) is disordered. 4 consecutive transmembrane segments (helical) span residues 57-77 (MFLVWVGTIITLSVTIEPNLF), 90-110 (GILTGILFFTVWFANFAEAVA), 245-265 (VLLAVLSLVFLFVVATLPVFA), and 276-296 (ILVALLVALIPTTIGGLLSAI). D329 (4-aspartylphosphate intermediate) is an active-site residue. Residues D366, E370, 397–404 (FSAKTRMS), and K416 each bind ATP. The Mg(2+) site is built by D539 and D543. The next 3 helical transmembrane spans lie at 599-619 (FSLANDIAKYFAIIPVIFASA), 635-655 (AVLSALIYNALIIPALIPLAL), and 681-701 (VIAPFIAIKLIDVLITLVGLA).

The protein belongs to the cation transport ATPase (P-type) (TC 3.A.3) family. Type IA subfamily. As to quaternary structure, the system is composed of three essential subunits: KdpA, KdpB and KdpC.

It is found in the cell membrane. The catalysed reaction is K(+)(out) + ATP + H2O = K(+)(in) + ADP + phosphate + H(+). Functionally, part of the high-affinity ATP-driven potassium transport (or Kdp) system, which catalyzes the hydrolysis of ATP coupled with the electrogenic transport of potassium into the cytoplasm. This subunit is responsible for energy coupling to the transport system and for the release of the potassium ions to the cytoplasm. This is Potassium-transporting ATPase ATP-binding subunit from Anabaena sp. (strain L31).